The sequence spans 502 residues: Solute carrier family 2, facilitated glucose transporter member 5 (502 aa).

Methionine 1 carries the N-acetylmethionine modification. Residues 1 to 17 (MEKEDQEKTGKLTLVLA) are Cytoplasmic-facing. A helical membrane pass occupies residues 18 to 38 (LATFLAAFGSSFQYGYNVAAV). Tyrosine 31 is a D-fructose binding site. The Extracellular segment spans residues 39–67 (NSPSEFMQQFYNDTYYDRNKENIESFTLT). Residue asparagine 50 is glycosylated (N-linked (GlcNAc...) asparagine). The chain crosses the membrane as a helical span at residues 68–90 (LLWSLTVSMFPFGGFIGSLMVGF). Over 91–97 (LVNNLGR) the chain is Cytoplasmic. A helical membrane pass occupies residues 98 to 118 (KGALLFNNIFSILPAILMGCS). At 119–125 (KIAKSFE) the chain is on the extracellular side. A helical transmembrane segment spans residues 126–148 (IIIASRLLVGICAGISSNVVPMY). Over 149 to 160 (LGELAPKNLRGA) the chain is Cytoplasmic. A helical transmembrane segment spans residues 161–181 (LGVVPQLFITVGILVAQLFGL). Residue glutamine 166 participates in D-fructose binding. The Extracellular segment spans residues 182 to 191 (RSVLASEEGW). A helical membrane pass occupies residues 192–212 (PILLGLTGVPAGLQLLLLPFF). Topologically, residues 213 to 276 (PESPRYLLIQ…LFRMQSLRWQ (64 aa)) are cytoplasmic. The chain crosses the membrane as a helical span at residues 277–297 (LISTIVLMAGQQLSGVNAIYY). D-fructose is bound by residues glutamine 287 and 295 to 297 (IYY). The Extracellular segment spans residues 298 to 312 (YADQIYLSAGVKSND). The chain crosses the membrane as a helical span at residues 313-333 (VQYVTAGTGAVNVFMTMVTVF). The Cytoplasmic portion of the chain corresponds to 334-341 (VVELWGRR). The chain crosses the membrane as a helical span at residues 342–362 (NLLLIGFSTCLTACIVLTVAL). At 363–370 (ALQNTISW) the chain is on the extracellular side. A helical transmembrane segment spans residues 371–393 (MPYVSIVCVIVYVIGHAVGPSPI). Histidine 386 lines the D-fructose pocket. Over 394 to 411 (PALFITEIFLQSSRPSAY) the chain is Cytoplasmic. The helical transmembrane segment at 412–432 (MIGGSVHWLSNFIVGLIFPFI) threads the bilayer. Residue 418 to 419 (HW) participates in D-fructose binding. At 433 to 438 (QVGLGP) the chain is on the extracellular side. A helical membrane pass occupies residues 439–459 (YSFIIFAIICLLTTIYIFMVV). Residues 460-502 (PETKGRTFVEINQIFAKKNKVSDVYPEKEEKELNDLPPATREQ) are Cytoplasmic-facing.

This sequence belongs to the major facilitator superfamily. Sugar transporter (TC 2.A.1.1) family. Glucose transporter subfamily. As to expression, detected in jejunum. Detected in kidney, skeletal muscle, brain and adipose tissue (at protein level). Detected in small intestine and in kidney, and at much lower levels in brain. Detected in enterocytes in duodenum, jejunum, and ileum.

Its subcellular location is the apical cell membrane. The protein localises to the cell membrane. It is found in the sarcolemma. It catalyses the reaction D-fructose(out) = D-fructose(in). Its activity is regulated as follows. Fructose uptake is inhibited by mercury ions. Fructose uptake is only slightly inhibited by cytochalasin B. Its function is as follows. Functions as a fructose transporter that has only low activity with other monosaccharides. Can mediate the uptake of deoxyglucose, but with low efficiency. Essential for fructose uptake in the small intestine. Plays a role in the regulation of salt uptake and blood pressure in response to dietary fructose. Required for the development of high blood pressure in response to high dietary fructose intake. This is Solute carrier family 2, facilitated glucose transporter member 5 from Rattus norvegicus (Rat).